The sequence spans 393 residues: S-adenosylmethionine synthase (393 aa).

His16 is an ATP binding site. Asp18 is a Mg(2+) binding site. Glu44 is a K(+) binding site. Residues Glu57 and Gln100 each coordinate L-methionine. The tract at residues 100–110 is flexible loop; sequence QSQDIAQGVDK. Residues 167-169, 238-239, Asp247, 253-254, Ala270, and Lys274 contribute to the ATP site; these read DAK, RF, and RK. Residue Asp247 participates in L-methionine binding. Lys278 lines the L-methionine pocket.

This sequence belongs to the AdoMet synthase family. Homotetramer; dimer of dimers. It depends on Mg(2+) as a cofactor. K(+) is required as a cofactor.

It is found in the cytoplasm. The catalysed reaction is L-methionine + ATP + H2O = S-adenosyl-L-methionine + phosphate + diphosphate. It participates in amino-acid biosynthesis; S-adenosyl-L-methionine biosynthesis; S-adenosyl-L-methionine from L-methionine: step 1/1. Functionally, catalyzes the formation of S-adenosylmethionine (AdoMet) from methionine and ATP. The overall synthetic reaction is composed of two sequential steps, AdoMet formation and the subsequent tripolyphosphate hydrolysis which occurs prior to release of AdoMet from the enzyme. This is S-adenosylmethionine synthase from Delftia acidovorans (strain DSM 14801 / SPH-1).